The following is a 345-amino-acid chain: MNDLTKKPILQVLAGETVSPPPVWLMRQAGRYLAEYRQVRSRAKNFIDFCFSPDLAAEVTLQPIRRFGFDAAILFADILLVPIALGRKVWFVTGEGPQLEPFDPRQFEELRLDQTEAVLGSIGETLKRVVPELPDTTTMIGFAGSPWTVATYMVEGGGSKDRFRTRVAAWEYPEAFDGMLDRIADVTAEYLIMQARSGAEVLKLFDSWAEGLPEPLFERVVIRPTKRIVDAVRAAGIDVPIIGFPRGAGTLYPRYARETGVTAIAVDTGVDPAWIQSVLPAGMPVQGHLDPSVLRAGGAALDGEVDRLLDQWAGRPHIFNLGHGITPDVPVAHVEQLLARIRDRS.

Residues 27–31, Asp77, Tyr152, Ser207, and His323 contribute to the substrate site; that span reads RQAGR.

The protein belongs to the uroporphyrinogen decarboxylase family. Homodimer.

The protein localises to the cytoplasm. The catalysed reaction is uroporphyrinogen III + 4 H(+) = coproporphyrinogen III + 4 CO2. It participates in porphyrin-containing compound metabolism; protoporphyrin-IX biosynthesis; coproporphyrinogen-III from 5-aminolevulinate: step 4/4. Its function is as follows. Catalyzes the decarboxylation of four acetate groups of uroporphyrinogen-III to yield coproporphyrinogen-III. In Maricaulis maris (strain MCS10) (Caulobacter maris), this protein is Uroporphyrinogen decarboxylase.